A 630-amino-acid chain; its full sequence is Transferrin-binding protein B (630 aa).

Residues 1 to 17 form the signal peptide; the sequence is MKSVPLITGGLSFLLSA. C18 carries N-palmitoyl cysteine lipidation. Residue C18 is the site of S-diacylglycerol cysteine attachment. Disordered stretches follow at residues 26–53, 280–301, and 591–613; these read DVDD…KSNL, VTPT…LEGG, and NNPT…SPNA. Positions 32–50 are enriched in polar residues; that stretch reads NPSSSKPRYQDDTSSSRTK.

Belongs to the TbpB family.

Its subcellular location is the cell outer membrane. The protein localises to the cell surface. In terms of biological role, haemophilus acquires iron by extracting it from serum transferrin (TF) in its human host. Acts as a transferrin receptor and is required for transferrin utilization. In Haemophilus influenzae (strain 86-028NP), this protein is Transferrin-binding protein B.